Here is a 492-residue protein sequence, read N- to C-terminus: UDP-N-acetylmuramate--L-alanine ligase (492 aa).

Position 126–132 (126–132) interacts with ATP; the sequence is GTHGKTT.

Belongs to the MurCDEF family.

The protein resides in the cytoplasm. It catalyses the reaction UDP-N-acetyl-alpha-D-muramate + L-alanine + ATP = UDP-N-acetyl-alpha-D-muramoyl-L-alanine + ADP + phosphate + H(+). It functions in the pathway cell wall biogenesis; peptidoglycan biosynthesis. Functionally, cell wall formation. The polypeptide is UDP-N-acetylmuramate--L-alanine ligase (Serratia proteamaculans (strain 568)).